Here is a 250-residue protein sequence, read N- to C-terminus: ATP synthase subunit a (250 aa).

5 helical membrane passes run 27 to 47 (TDTV…AFYL), 83 to 103 (IAPF…ISNW), 129 to 149 (INYV…AGIW), 191 to 211 (IFAG…IMWA), and 219 to 239 (FDLF…ILYF).

It belongs to the ATPase A chain family. In terms of assembly, F-type ATPases have 2 components, CF(1) - the catalytic core - and CF(0) - the membrane proton channel. CF(1) has five subunits: alpha(3), beta(3), gamma(1), delta(1), epsilon(1). CF(0) has three main subunits: a(1), b(2) and c(9-12). The alpha and beta chains form an alternating ring which encloses part of the gamma chain. CF(1) is attached to CF(0) by a central stalk formed by the gamma and epsilon chains, while a peripheral stalk is formed by the delta and b chains.

It localises to the cell membrane. Functionally, key component of the proton channel; it plays a direct role in the translocation of protons across the membrane. In Mycobacterium ulcerans (strain Agy99), this protein is ATP synthase subunit a.